The following is a 530-amino-acid chain: Membrane protein insertase YidC (530 aa).

4 consecutive transmembrane segments (helical) span residues valine 5–proline 25, tyrosine 348–histidine 368, leucine 418–isoleucine 438, and proline 492–isoleucine 512.

This sequence belongs to the OXA1/ALB3/YidC family. Type 1 subfamily. In terms of assembly, interacts with the Sec translocase complex via SecD. Specifically interacts with transmembrane segments of nascent integral membrane proteins during membrane integration.

Its subcellular location is the cell inner membrane. Required for the insertion and/or proper folding and/or complex formation of integral membrane proteins into the membrane. Involved in integration of membrane proteins that insert both dependently and independently of the Sec translocase complex, as well as at least some lipoproteins. Aids folding of multispanning membrane proteins. In Geotalea daltonii (strain DSM 22248 / JCM 15807 / FRC-32) (Geobacter daltonii), this protein is Membrane protein insertase YidC.